The chain runs to 211 residues: Tudor-interacting repair regulator protein (211 aa).

Glycyl lysine isopeptide (Lys-Gly) (interchain with G-Cter in ubiquitin) cross-links involve residues lysine 10 and lysine 151. The segment at 118-205 is interaction with PXN; the sequence is TLEQLHAVEI…TEKQKKALEK (88 aa).

Belongs to the Nudix hydrolase family. TIRR subfamily. In terms of assembly, homodimer. Interacts with TP53BP1 (via the Tudor-like domain); interaction is abolished following DNA damage and TP53BP1 phosphorylation by ATM. Interacts (via the cytoplasmic part) with SDC4. Interacts with TGFB1I1 and PXN.

It is found in the nucleus. Functionally, key regulator of TP53BP1 required to stabilize TP53BP1 and regulate its recruitment to chromatin. In absence of DNA damage, interacts with the tandem Tudor-like domain of TP53BP1, masking the region that binds histone H4 dimethylated at 'Lys-20' (H4K20me2), thereby preventing TP53BP1 recruitment to chromatin and maintaining TP53BP1 localization to the nucleus. Following DNA damage, ATM-induced phosphorylation of TP53BP1 and subsequent recruitment of RIF1 leads to dissociate NUDT16L1/TIRR from TP53BP1, unmasking the tandem Tudor-like domain and allowing recruitment of TP53BP1 to DNA double strand breaks (DSBs). Binds U8 snoRNA. In Mus musculus (Mouse), this protein is Tudor-interacting repair regulator protein.